The following is a 342-amino-acid chain: MATH domain and coiled-coil domain-containing protein At3g44800 (342 aa).

An MATH domain is found at 3 to 129 (YEKFTWVIKN…NNEVKIVAEV (127 aa)). Positions 253–327 (KVDWLERKLE…ALLEKEKGKV (75 aa)) form a coiled coil.

The protein is MATH domain and coiled-coil domain-containing protein At3g44800 of Arabidopsis thaliana (Mouse-ear cress).